A 353-amino-acid polypeptide reads, in one-letter code: Transcription factor MafA (353 aa).

Ser14 is subject to Phosphoserine. Lys32 participates in a covalent cross-link: Glycyl lysine isopeptide (Lys-Gly) (interchain with G-Cter in SUMO2). Disordered regions lie at residues 40 to 108 and 177 to 219; these read RFCH…GGTS and ADDM…GAGH. Residues 46 to 73 show a composition bias toward low complexity; it reads PPGSLSSTPLSTPCSSVPSSPSFCAPSP. Ser49 is subject to Phosphoserine. Phosphothreonine is present on residues Thr53 and Thr57. A phosphoserine mark is found at Ser61 and Ser65. A compositionally biased stretch (gly residues) spans 74 to 93; sequence GTGGGGGAGGGGGSSQAGGA. Basic residues predominate over residues 183–210; sequence GHHHGAHHAAHHHHAAHHHHHHHHHHGG. A basic motif region spans residues 254-279; it reads RLKQKRRTLKNRGYAQSCRFKRVQQR. The 64-residue stretch at 254–317 folds into the bZIP domain; it reads RLKQKRRTLK…DLYKEKYEKL (64 aa). The segment at 282–303 is leucine-zipper; it reads LESEKCQLQSQVEQLKLEVGRL. The segment at 315–353 is disordered; it reads EKLAGRGGPGSAGGAGFPREPSPPQAGPGGAKGTADFFL. Residues 319 to 330 are compositionally biased toward gly residues; that stretch reads GRGGPGSAGGAG.

Belongs to the bZIP family. Maf subfamily. In terms of assembly, forms homodimers or heterodimers. Monomers and dimers are able to bind DNA, but the off-rate is faster for monomers. Interacts with NEUROD1 and PDX1. May interact with MAFB, FOS, JUN and PCAF. In terms of processing, ubiquitinated, leading to its degradation by the proteasome. Phosphorylated at tyrosines. In terms of tissue distribution, expressed in the islets of Langerhans (at protein level).

Its subcellular location is the nucleus. Its function is as follows. Transcription factor that activates insulin gene expression. Acts synergistically with NEUROD1/BETA2 and PDX1. Binds the insulin enhancer C1/RIPE3b element. Binds to consensus TRE-type MARE 5'-TGCTGACTCAGCA-3' DNA sequence. The protein is Transcription factor MafA (MAFA) of Homo sapiens (Human).